The primary structure comprises 155 residues: MNTYEGNLVANNIKIGIVVARFNEFITSKLLSGALDNLKRENVNEKDIEVAWVPGAFEIPLIASKMAKSKKYDAIICLGAVIRGNTSHYDYVCSEVSKGIAQISLNSEIPVMFGVLTTDTIEQAIERAGTKAGNKGSECAQGAIEMVNLIRTLDA.

5-amino-6-(D-ribitylamino)uracil is bound by residues F22, 56–58 (AFE), and 80–82 (AVI). 85–86 (NT) lines the (2S)-2-hydroxy-3-oxobutyl phosphate pocket. H88 (proton donor) is an active-site residue. F113 contacts 5-amino-6-(D-ribitylamino)uracil. R127 provides a ligand contact to (2S)-2-hydroxy-3-oxobutyl phosphate.

This sequence belongs to the DMRL synthase family.

It catalyses the reaction (2S)-2-hydroxy-3-oxobutyl phosphate + 5-amino-6-(D-ribitylamino)uracil = 6,7-dimethyl-8-(1-D-ribityl)lumazine + phosphate + 2 H2O + H(+). The protein operates within cofactor biosynthesis; riboflavin biosynthesis; riboflavin from 2-hydroxy-3-oxobutyl phosphate and 5-amino-6-(D-ribitylamino)uracil: step 1/2. In terms of biological role, catalyzes the formation of 6,7-dimethyl-8-ribityllumazine by condensation of 5-amino-6-(D-ribitylamino)uracil with 3,4-dihydroxy-2-butanone 4-phosphate. This is the penultimate step in the biosynthesis of riboflavin. In Streptococcus pneumoniae serotype 2 (strain D39 / NCTC 7466), this protein is 6,7-dimethyl-8-ribityllumazine synthase.